The sequence spans 354 residues: Uroporphyrinogen decarboxylase (354 aa).

Substrate is bound by residues 27 to 31 (RQAGR), aspartate 77, tyrosine 154, threonine 209, and histidine 327.

Belongs to the uroporphyrinogen decarboxylase family. Homodimer.

The protein resides in the cytoplasm. The enzyme catalyses uroporphyrinogen III + 4 H(+) = coproporphyrinogen III + 4 CO2. Its pathway is porphyrin-containing compound metabolism; protoporphyrin-IX biosynthesis; coproporphyrinogen-III from 5-aminolevulinate: step 4/4. In terms of biological role, catalyzes the decarboxylation of four acetate groups of uroporphyrinogen-III to yield coproporphyrinogen-III. The chain is Uroporphyrinogen decarboxylase from Salmonella paratyphi A (strain ATCC 9150 / SARB42).